The chain runs to 130 residues: Small ribosomal subunit protein uS9 (130 aa).

Residues 98-130 are disordered; that stretch reads LKRAGMLTRDPRMKERKKPGLKGARRSPQFSKR. Over residues 111-130 the composition is skewed to basic residues; it reads KERKKPGLKGARRSPQFSKR.

The protein belongs to the universal ribosomal protein uS9 family.

The polypeptide is Small ribosomal subunit protein uS9 (Macrococcus caseolyticus (strain JCSC5402) (Macrococcoides caseolyticum)).